The primary structure comprises 610 residues: DNA mismatch repair protein MutL (610 aa).

Belongs to the DNA mismatch repair MutL/HexB family.

In terms of biological role, this protein is involved in the repair of mismatches in DNA. It is required for dam-dependent methyl-directed DNA mismatch repair. May act as a 'molecular matchmaker', a protein that promotes the formation of a stable complex between two or more DNA-binding proteins in an ATP-dependent manner without itself being part of a final effector complex. The protein is DNA mismatch repair protein MutL of Rickettsia rickettsii (strain Iowa).